The sequence spans 50 residues: F420-non-reducing hydrogenase vhu subunit U (50 aa).

Positions 27 and 30 each coordinate Ni(2+). Position 27 (Sec27) is a non-standard amino acid, selenocysteine. Residues 34–50 (IIVKDEKGNKIIEVIKE) constitute a propeptide, removed in mature form.

It belongs to the [NiFe]/[NiFeSe] hydrogenase large subunit family. The F420-non-reducing hydrogenase vhu is composed of four subunits; VhuA, VhuD, VhuG and VhuU. Ni(2+) is required as a cofactor.

The chain is F420-non-reducing hydrogenase vhu subunit U (vhuU) from Methanocaldococcus jannaschii (strain ATCC 43067 / DSM 2661 / JAL-1 / JCM 10045 / NBRC 100440) (Methanococcus jannaschii).